The sequence spans 32 residues: Conotoxin sr7a (32 aa).

3 disulfides stabilise this stretch: Cys1–Cys17, Cys8–Cys21, and Cys16–Cys31. Serine amide is present on Ser32.

In terms of tissue distribution, expressed by the venom duct.

The protein localises to the secreted. Functionally, elicits hyperactivity when injected intracranially into mice and produces paralysis when injected into the pedal muscle of freshwater snails, Pomacea paludosa, but it has no apparent effect after intramuscular injection into the limpet Patella opea or the freshwater fish Lebistes reticulatus. This is Conotoxin sr7a from Conus spurius (Alphabet cone).